The chain runs to 347 residues: UDP-N-acetylenolpyruvoylglucosamine reductase (347 aa).

Residues 24 to 195 enclose the FAD-binding PCMH-type domain; it reads FDARARVAAR…VAVTFRLPKA (172 aa). Arginine 171 is a catalytic residue. Serine 247 acts as the Proton donor in catalysis. Glutamate 343 is a catalytic residue.

It belongs to the MurB family. FAD is required as a cofactor.

The protein resides in the cytoplasm. The enzyme catalyses UDP-N-acetyl-alpha-D-muramate + NADP(+) = UDP-N-acetyl-3-O-(1-carboxyvinyl)-alpha-D-glucosamine + NADPH + H(+). The protein operates within cell wall biogenesis; peptidoglycan biosynthesis. In terms of biological role, cell wall formation. This chain is UDP-N-acetylenolpyruvoylglucosamine reductase, found in Burkholderia pseudomallei (strain 668).